A 256-amino-acid polypeptide reads, in one-letter code: Ribosomal RNA large subunit methyltransferase E (256 aa).

Gly-50, Trp-52, Asp-69, Asp-85, and Asp-108 together coordinate S-adenosyl-L-methionine. Lys-148 functions as the Proton acceptor in the catalytic mechanism. The TRAM domain occupies 195 to 253 (SLRKGDVVDVTIDAMGKTGDGIAHVDDFVVFVKGGSVGDKLKIKITDVKPSFAFADIVE).

The protein belongs to the class I-like SAM-binding methyltransferase superfamily. RNA methyltransferase RlmE family.

It localises to the cytoplasm. The catalysed reaction is uridine(2552) in 23S rRNA + S-adenosyl-L-methionine = 2'-O-methyluridine(2552) in 23S rRNA + S-adenosyl-L-homocysteine + H(+). In terms of biological role, specifically methylates the uridine in position 2552 of 23S rRNA at the 2'-O position of the ribose in the fully assembled 50S ribosomal subunit. This is Ribosomal RNA large subunit methyltransferase E from Methanocella arvoryzae (strain DSM 22066 / NBRC 105507 / MRE50).